The following is a 188-amino-acid chain: Pyridoxal 5'-phosphate synthase subunit PdxT (188 aa).

Glycine 47–serine 49 provides a ligand contact to L-glutamine. Cysteine 79 acts as the Nucleophile in catalysis. Residues arginine 106 and isoleucine 134–arginine 135 contribute to the L-glutamine site. Catalysis depends on charge relay system residues histidine 169 and glutamate 171.

This sequence belongs to the glutaminase PdxT/SNO family. In the presence of PdxS, forms a dodecamer of heterodimers. Only shows activity in the heterodimer.

It carries out the reaction aldehydo-D-ribose 5-phosphate + D-glyceraldehyde 3-phosphate + L-glutamine = pyridoxal 5'-phosphate + L-glutamate + phosphate + 3 H2O + H(+). The catalysed reaction is L-glutamine + H2O = L-glutamate + NH4(+). Its pathway is cofactor biosynthesis; pyridoxal 5'-phosphate biosynthesis. In terms of biological role, catalyzes the hydrolysis of glutamine to glutamate and ammonia as part of the biosynthesis of pyridoxal 5'-phosphate. The resulting ammonia molecule is channeled to the active site of PdxS. The chain is Pyridoxal 5'-phosphate synthase subunit PdxT from Caldicellulosiruptor saccharolyticus (strain ATCC 43494 / DSM 8903 / Tp8T 6331).